The chain runs to 344 residues: Type II methyltransferase M.FnuDI (344 aa).

One can recognise an SAM-dependent MTase C5-type domain in the interval 1–330 (MKLLSLFSGA…KRIKETLTDK (330 aa)). Residue Cys71 is part of the active site.

It belongs to the class I-like SAM-binding methyltransferase superfamily. C5-methyltransferase family.

It carries out the reaction a 2'-deoxycytidine in DNA + S-adenosyl-L-methionine = a 5-methyl-2'-deoxycytidine in DNA + S-adenosyl-L-homocysteine + H(+). Functionally, a methylase, recognizes the double-stranded sequence 5'-GGCC-3', methylates C-? on both strands, and protects the DNA from cleavage by the FnuDI endonuclease. The polypeptide is Type II methyltransferase M.FnuDI (fnuDIM) (Fusobacterium nucleatum).